The chain runs to 199 residues: Protein-methionine-sulfoxide reductase heme-binding subunit MsrQ (199 aa).

The next 4 membrane-spanning stretches (helical) occupy residues 10 to 30 (WLKV…FWAI), 82 to 102 (LWCF…ELGI), 116 to 136 (PYLT…LTST), and 153 to 173 (VVYL…KILS).

Belongs to the MsrQ family. In terms of assembly, heterodimer of a catalytic subunit (MsrP) and a heme-binding subunit (MsrQ). It depends on FMN as a cofactor. The cofactor is heme b.

The protein resides in the cell inner membrane. In terms of biological role, part of the MsrPQ system that repairs oxidized periplasmic proteins containing methionine sulfoxide residues (Met-O), using respiratory chain electrons. Thus protects these proteins from oxidative-stress damage caused by reactive species of oxygen and chlorine generated by the host defense mechanisms. MsrPQ is essential for the maintenance of envelope integrity under bleach stress, rescuing a wide series of structurally unrelated periplasmic proteins from methionine oxidation, including the primary periplasmic chaperone SurA and the lipoprotein Pal. MsrQ provides electrons for reduction to the reductase catalytic subunit MsrP, using the quinone pool of the respiratory chain. The chain is Protein-methionine-sulfoxide reductase heme-binding subunit MsrQ from Salmonella enteritidis PT4 (strain P125109).